The sequence spans 92 residues: Alpha-defensin 25 (92 aa).

Positions Met1 to Ala19 are cleaved as a signal peptide. Positions Asp20–Glu57 are excised as a propeptide. Residues Asn24–Gln40 show a composition bias toward basic and acidic residues. The tract at residues Asn24–Ser53 is disordered. Disulfide bonds link Cys63-Cys92, Cys65-Cys80, and Cys70-Cys91.

The protein belongs to the alpha-defensin family.

It localises to the secreted. May have microbicidal activities. This chain is Alpha-defensin 25 (Defa25), found in Mus musculus (Mouse).